Consider the following 475-residue polypeptide: Ribulose bisphosphate carboxylase large chain (475 aa).

Positions 1 to 2 (MS) are excised as a propeptide. P3 bears the N-acetylproline mark. K14 carries the post-translational modification N6,N6,N6-trimethyllysine. Substrate is bound by residues N123 and T173. The Proton acceptor role is filled by K175. K177 provides a ligand contact to substrate. Residues K201, D203, and E204 each coordinate Mg(2+). K201 is modified (N6-carboxylysine). H294 functions as the Proton acceptor in the catalytic mechanism. Residues R295, H327, and S379 each coordinate substrate.

This sequence belongs to the RuBisCO large chain family. Type I subfamily. As to quaternary structure, heterohexadecamer of 8 large chains and 8 small chains; disulfide-linked. The disulfide link is formed within the large subunit homodimers. It depends on Mg(2+) as a cofactor. In terms of processing, the disulfide bond which can form in the large chain dimeric partners within the hexadecamer appears to be associated with oxidative stress and protein turnover.

The protein resides in the plastid. The protein localises to the chloroplast. The enzyme catalyses 2 (2R)-3-phosphoglycerate + 2 H(+) = D-ribulose 1,5-bisphosphate + CO2 + H2O. It catalyses the reaction D-ribulose 1,5-bisphosphate + O2 = 2-phosphoglycolate + (2R)-3-phosphoglycerate + 2 H(+). In terms of biological role, ruBisCO catalyzes two reactions: the carboxylation of D-ribulose 1,5-bisphosphate, the primary event in carbon dioxide fixation, as well as the oxidative fragmentation of the pentose substrate in the photorespiration process. Both reactions occur simultaneously and in competition at the same active site. The protein is Ribulose bisphosphate carboxylase large chain of Illicium oligandrum (Star anise).